Consider the following 493-residue polypeptide: Cobyric acid synthase (493 aa).

In terms of domain architecture, GATase cobBQ-type spans 246 to 440 (PIDIAVIKMP…IHGVFDGVVF (195 aa)). The Nucleophile role is filled by Cys326. His432 is a catalytic residue.

Belongs to the CobB/CobQ family. CobQ subfamily.

It participates in cofactor biosynthesis; adenosylcobalamin biosynthesis. Functionally, catalyzes amidations at positions B, D, E, and G on adenosylcobyrinic A,C-diamide. NH(2) groups are provided by glutamine, and one molecule of ATP is hydrogenolyzed for each amidation. The protein is Cobyric acid synthase of Clostridium botulinum (strain ATCC 19397 / Type A).